A 202-amino-acid polypeptide reads, in one-letter code: FMN-dependent NADH:quinone oxidoreductase (202 aa).

Residues S10 and M95 to F98 each bind FMN.

The protein belongs to the azoreductase type 1 family. Homodimer. Requires FMN as cofactor.

It carries out the reaction 2 a quinone + NADH + H(+) = 2 a 1,4-benzosemiquinone + NAD(+). The catalysed reaction is N,N-dimethyl-1,4-phenylenediamine + anthranilate + 2 NAD(+) = 2-(4-dimethylaminophenyl)diazenylbenzoate + 2 NADH + 2 H(+). Quinone reductase that provides resistance to thiol-specific stress caused by electrophilic quinones. Its function is as follows. Also exhibits azoreductase activity. Catalyzes the reductive cleavage of the azo bond in aromatic azo compounds to the corresponding amines. The polypeptide is FMN-dependent NADH:quinone oxidoreductase (Alkalilimnicola ehrlichii (strain ATCC BAA-1101 / DSM 17681 / MLHE-1)).